A 529-amino-acid polypeptide reads, in one-letter code: Berberine bridge enzyme-like 7 (529 aa).

The signal sequence occupies residues 1-19 (MKEALSILCLALLVSVSEA). Cys32 and Cys95 form a disulfide bridge. Asn52 is a glycosylation site (N-linked (GlcNAc...) asparagine). The FAD-binding PCMH-type domain maps to 69–247 (YSSPNFKKLL…LSWKINLVKV (179 aa)). Positions 110-172 (HDLEGLSYRS…QTLAFPAGVC (63 aa)) form a cross-link, 6-(S-cysteinyl)-8alpha-(pros-histidyl)-FAD (His-Cys). 3 N-linked (GlcNAc...) asparagine glycosylation sites follow: Asn257, Asn341, and Asn439.

The protein belongs to the oxygen-dependent FAD-linked oxidoreductase family. FAD serves as cofactor. In terms of processing, the FAD cofactor is bound via a bicovalent 6-S-cysteinyl, 8alpha-N1-histidyl FAD linkage.

It is found in the secreted. The protein localises to the cell wall. Probable flavin-dependent oxidoreductase. This Arabidopsis thaliana (Mouse-ear cress) protein is Berberine bridge enzyme-like 7.